Here is a 764-residue protein sequence, read N- to C-terminus: MDSSGTDSAKELHVGLDPTTEEEYATQSKLLQEFINIPSIDKAWIFNSDSGSQAMFALSQANLLANKKKKFMLSGHISNESNQSVNFHWAPFPIEMTGASAFVPSPSGLKLLVIRNPENESPTKFEIWNSSQLEKEFHIPQKVHGSVYVDGWFEGISWDSDETHVAYVAEEPSRPKPTFDHLGYYKKENSLDKGIGSWKGEGDWEEEWGEAYAGKRQPALFVINVDSGEVEPIKGIPRSISVGQVVWSPNSNGSAQYLVFAGWLGDKRKFGIKYCYNRPCAIYAIKFTSDEPKDDDANEFPIHNLTKSISSGFCPRFSKDGKFLVFVSAKTAVDSGAHWATESLHRIDWPSDGKLPESTNIVDVIQVVNCPKDGCFPGLYVTGLLSDPWLSDGHSLMLSTYWRSCRVILSVNLLSGEVSRASPSDSDYSWNALALDGDSIVAVSSSPVSVPEIKYGKKGLDSAGKPSWLWSNIQSPIRYSEKVMAGLSSLQFKILKVPISDVSEGLAEGAKNPIEAIYVSSSKSKENGKCDPLIAVLHGGPHSVSPCSFSRTMAYLSSIGYSQLIINYRGSLGYGEDALQSLPGKVGSQDVKDCLLAVDHAIEMGIADPSRITVLGGSHGGFLTTHLIGQAPDKFVAAAARNPVCNMASMVGITDIPDWCFFEAYGDQSHYTEAPSAEDLSRFHQMSPISHISKVKTPTLFLLGTKDLRVPISNGFQYVRALKEKGVEVKVLVFPNDNHPLDRPQTDYESFLNIAVWFNKYCKL.

Catalysis depends on charge relay system residues serine 618, aspartate 707, and histidine 739.

Belongs to the peptidase S9C family. In terms of assembly, homotetramer.

It is found in the cytoplasm. It localises to the nucleus. The catalysed reaction is Cleavage of an N-acetyl or N-formyl amino acid from the N-terminus of a polypeptide.. Its activity is regulated as follows. Strongly inhibited by the serine protease inhibitor diisopropyl fluorophosphate. Its function is as follows. Catalyzes the hydrolysis of the N-terminal peptide bond of an N-acetylated peptide to generate an N-acetylated amino acid and a peptide with a free N-terminus. Can degrade the glycated RuBisCO (ribulose-1,5-bisphosphate carboxylase/oxygenase) protein but not the native protein. May be involved in the elimination of glycated proteins. Plays a homeostatic role in sustaining the cytoplasmic antioxidative system. May contribute to the elimination of the oxidized proteins in the cytoplasm. This chain is Acylamino-acid-releasing enzyme, found in Arabidopsis thaliana (Mouse-ear cress).